The primary structure comprises 197 residues: Holliday junction branch migration complex subunit RuvA (197 aa).

The segment at 1–64 (MIARLAGKVA…QDAIELYGFA (64 aa)) is domain I. Residues 65–141 (SEDEEAVFRA…LALLARAAGP (77 aa)) form a domain II region. A flexible linker region spans residues 141–145 (PARAK). The domain III stretch occupies residues 146-197 (PGAGVVEQLRQALVNLGYKPPQADAAADALRDEAEGKKLDELLREALKRLRG).

Belongs to the RuvA family. Homotetramer. Forms an RuvA(8)-RuvB(12)-Holliday junction (HJ) complex. HJ DNA is sandwiched between 2 RuvA tetramers; dsDNA enters through RuvA and exits via RuvB. An RuvB hexamer assembles on each DNA strand where it exits the tetramer. Each RuvB hexamer is contacted by two RuvA subunits (via domain III) on 2 adjacent RuvB subunits; this complex drives branch migration. In the full resolvosome a probable DNA-RuvA(4)-RuvB(12)-RuvC(2) complex forms which resolves the HJ.

Its subcellular location is the cytoplasm. Its function is as follows. The RuvA-RuvB-RuvC complex processes Holliday junction (HJ) DNA during genetic recombination and DNA repair, while the RuvA-RuvB complex plays an important role in the rescue of blocked DNA replication forks via replication fork reversal (RFR). RuvA specifically binds to HJ cruciform DNA, conferring on it an open structure. The RuvB hexamer acts as an ATP-dependent pump, pulling dsDNA into and through the RuvAB complex. HJ branch migration allows RuvC to scan DNA until it finds its consensus sequence, where it cleaves and resolves the cruciform DNA. The protein is Holliday junction branch migration complex subunit RuvA of Anaeromyxobacter sp. (strain Fw109-5).